Consider the following 531-residue polypeptide: MKITFISGQEVSLGTSFLLFSKKIVMNELNQPLLAIIKNVAKTKNLSIEEVVFCLKTALEQAYKKHLNFVNVEVNINFDKGIINVEQLFNVVSDENEDYDDFLEIPLQAANKINSSLQLGDVLRKPIPLKNISSDLINKMIAIFNQKISETNFKAVMSEFSSEVGEVIEAKVEDIDTNKEGGLKGYIINLETTKGYISKRELSKGERLEIGKKYLFVIKEIQRQASLWPITLSRSDTRLLQFLLTSNTPEIENGTIVIKKIERSPGVKSKIAVISNDPAVDPVAAILGPKGEKIRGISEEFNGEIIDIVFWNEDKLKFLINAILPAEVIGYNILQDDERDTSIEVVVPANQIANVFGFKGVNIRLISNLTGWNSVDVYSEKDASEANIKFTRLSFEPEGLFGIKKRREKIISNDATDKVFYTSKDNVIDDEIIVDLAKDLMVDNKQKQPEQVAKQVVEKSQLEKQVTPKEKEKVQPKAKVHSNSHSKKPAKPNQIFSITVDASDKNLKKDQVDNNQTNPQTKQTFDSFDDL.

An S1 motif domain is found at 165–235 (GEVIEAKVED…SLWPITLSRS (71 aa)). A KH domain is found at 340–410 (DTSIEVVVPA…FGIKKRREKI (71 aa)). The segment covering 463-475 (EKQVTPKEKEKVQ) has biased composition (basic and acidic residues). The segment at 463-531 (EKQVTPKEKE…KQTFDSFDDL (69 aa)) is disordered. A compositionally biased stretch (basic residues) spans 476–490 (PKAKVHSNSHSKKPA). The segment covering 502–512 (ASDKNLKKDQV) has biased composition (basic and acidic residues). A compositionally biased stretch (polar residues) spans 513–531 (DNNQTNPQTKQTFDSFDDL).

It belongs to the NusA family. As to quaternary structure, monomer. Binds directly to the core enzyme of the DNA-dependent RNA polymerase and to nascent RNA.

The protein localises to the cytoplasm. Functionally, participates in both transcription termination and antitermination. The polypeptide is Transcription termination/antitermination protein NusA (Mycoplasma genitalium (strain ATCC 33530 / DSM 19775 / NCTC 10195 / G37) (Mycoplasmoides genitalium)).